The following is a 156-amino-acid chain: Ribosome maturation factor RimP (156 aa).

It belongs to the RimP family.

It localises to the cytoplasm. Its function is as follows. Required for maturation of 30S ribosomal subunits. The protein is Ribosome maturation factor RimP of Fusobacterium nucleatum subsp. nucleatum (strain ATCC 25586 / DSM 15643 / BCRC 10681 / CIP 101130 / JCM 8532 / KCTC 2640 / LMG 13131 / VPI 4355).